We begin with the raw amino-acid sequence, 838 residues long: MSENTKVEAKRVFIGAGCNRVVNNVSWGASGLVSFGAQNAVAVFCPKTAQILTTLPGHKASVNCTHWLPTSKFAFKAKKLDRQYLLSGDSDGIIILWELSTLNNDWRHVLQLPLSHKKGVTCITAYMVSETDAMFASASSDGVVNVWDVSFPSQPSEECKVVCLDSICVDTKAIVTLSLAELPQNPGRFALALGGLDNKIKLYSGERTGKFTSVCELKGHTDWIRSLDFSLPLHTTEEIPNSIMLVSSSQDKVIRIWKLVLVGDVGSWRREITLASYIEGPVFVSGTFTYQISVESVLIGHEDWVYSVEWQPPVIDFIDGRLVNHQPLSILSASMDKTMMIWRPEKKTGVWVNVVCVGELSHCALGFYGGHWSPNSLSILAHGYGGAFHLWRNVSSSKESENWQMQKVPSGHFAAVTDVTWARTGEYLLSVSQDQTTRVFSAWKNDEGNEAEDEHWHELARPQVHGHDINCVAMVQGKGNHRFVSGAEEKVVRVFEAPLSFLKTLNHTCAGGEGSFPEDLQADVQVLGANMSALGLSQKPIYLHSSSEPLERNGGGEGLDTFETVPEAAPAELKEPPIEDQLAFHTLWPESHKLYGHGNELFSLCSDHKGNLVASSCKAQSASMAEIWLWEVGTWKAVGRLQSHSLTVTHLEFSYDDTLLLSVSRDRHFSVFSIQRTDNGEVSHKLMAKVEAHKRIIWACSWNPFGHQFATSSRDKTVKIWSVENDARIKQILVLPPFGSSVTAVAWTGLDRNEKSGCVAVGMESGLIELSNVKIIETEEGTTATAALALRLEPFMCHVSAVNRLAWRPTEKCESNQSLRWLTSCGDDNCVRVFNFKF.

WD repeat units follow at residues 17-56 (GCNRVVNNVSWGASGLVSFGAQNAVAVFCPKTAQILTTLP), 57-107 (GHKA…NDWR), 115-157 (SHKK…QPSE), 174-213 (IVTLSLAELPQNPGRFALALGGLDNKIKLYSGERTGKFTS), 219-267 (GHTD…DVGS), 300-352 (GHED…GVWV), 361-401 (SHCA…KESE), 411-450 (GHFAAVTDVTWARTGEYLLSVSQDQTTRVFSAWKNDEGNE), 464-505 (VHGH…LKTL), 596-640 (GHGN…AVGR), 643-682 (SHSLTVTHLEFSYDDTLLLSVSRDRHFSVFSIQRTDNGEV), 692-731 (AHKRIIWACSWNPFGHQFATSSRDKTVKIWSVENDARIKQ), 737-781 (PFGS…TEEG), and 797-835 (CHVSAVNRLAWRPTEKCESNQSLRWLTSCGDDNCVRVFN).

This sequence belongs to the WD repeat ELP2 family. Component of the elongator complex which consists of ELP1/ELO2, ELP2, ELP3/ELO3, ELP4/ELO1, ELP5, and ELP6. In terms of tissue distribution, expressed in leaves, stems, roots, flowers, siliques and guard cells.

It localises to the cytoplasm. Its subcellular location is the nucleus. It functions in the pathway tRNA modification; 5-methoxycarbonylmethyl-2-thiouridine-tRNA biosynthesis. Its function is as follows. Component of the elongator complex which is required for multiple tRNA modifications, including mcm5U (5-methoxycarbonylmethyl uridine), mcm5s2U (5-methoxycarbonylmethyl-2-thiouridine), and ncm5U (5-carbamoylmethyl uridine). The elongator complex catalyzes formation of carboxymethyluridine in the wobble base at position 34 in tRNAs. Promotes organ development by modulating cell division rate. Prevents abscisic acid (ABA) signaling leading to stomatal closure and seedling growth inhibition. Involved in oxidative stress signaling. Prevents anthocyanin accumulation. Accelerator of defense gene induction required for rapid defense gene induction, and for the establishment of both basal and effector-triggered immunity (ETI), in a NPR1-independent manner, but is not required for systemic acquired resistance (SAR) establishment. The sequence is that of Elongator complex protein 2 (ELP2) from Arabidopsis thaliana (Mouse-ear cress).